The chain runs to 418 residues: AP-3 complex subunit mu-2 (418 aa).

The 242-residue stretch at 176–417 folds into the MHD domain; it reads NNEAYFDVVE…MTKAGKFQVR (242 aa).

The protein belongs to the adaptor complexes medium subunit family. In terms of assembly, adaptor protein complex 3 (AP-3) is a heterotetramer composed of two large adaptins (delta-type subunit AP3D1 and beta-type subunit AP3B1 or AP3B2), a medium adaptin (mu-type subunit AP3M1 or AP3M2) and a small adaptin (sigma-type subunit APS1 or AP3S2). AP-3 associates with the BLOC-1 complex.

The protein localises to the golgi apparatus. Its subcellular location is the cytoplasmic vesicle membrane. Functionally, component of the adaptor complexes which link clathrin to receptors in coated vesicles. Clathrin-associated protein complexes are believed to interact with the cytoplasmic tails of membrane proteins, leading to their selection and concentration. Ap47 is a subunit of the plasma membrane adaptor. In concert with the BLOC-1 complex, AP-3 is required to target cargos into vesicles assembled at cell bodies for delivery into neurites and nerve terminals. This chain is AP-3 complex subunit mu-2 (Ap3m2), found in Mus musculus (Mouse).